A 408-amino-acid polypeptide reads, in one-letter code: Multidrug resistance protein MdtG (408 aa).

A run of 11 helical transmembrane segments spans residues 16-36, 58-78, 92-112, 115-135, 146-166, 173-193, 224-244, 256-276, 290-310, 319-339, and 378-398; these read LIVA…VMPF, IVFS…GGLA, LGMG…QFLI, ALLG…ATQV, TLST…GLLA, PVFF…LFCI, LFVT…ILTL, VAFI…LSAP, ILIT…YVQT, FLLG…LVYN, and AVFL…WNSL.

It belongs to the major facilitator superfamily. DHA1 family. MdtG (TC 2.A.1.2.20) subfamily.

The protein resides in the cell inner membrane. In terms of biological role, confers resistance to fosfomycin and deoxycholate. This Escherichia coli (strain 55989 / EAEC) protein is Multidrug resistance protein MdtG.